A 521-amino-acid chain; its full sequence is Peroxisomal membrane protein PEX23 (521 aa).

Positions 1-26 are disordered; that stretch reads MPTDPNSNPVSKAGLTPSSINSNISE. N-linked (GlcNAc...) asparagine glycans are attached at residues N23 and N53. The next 2 helical transmembrane spans lie at 111–128 and 133–150; these read SYISVLLVTTATLFILYF and IYLGHLSIVGLIFLYSIF. N-linked (GlcNAc...) asparagine glycosylation occurs at N189. A helical membrane pass occupies residues 198–217; sequence LLFTSIFLSPGYILVCYLLF. N279 carries an N-linked (GlcNAc...) asparagine glycan. The tract at residues 425-446 is disordered; it reads VSPGDDSSTDSASLPHSASETV. Residues 429 to 446 show a composition bias toward polar residues; sequence DDSSTDSASLPHSASETV. Residues N463 and N467 are each glycosylated (N-linked (GlcNAc...) asparagine). The interval 465–486 is disordered; sequence SGNITTSAETAPDSAGTAKKRK.

The protein belongs to the PEX28-32 family. PEX32 subfamily.

The protein localises to the endoplasmic reticulum membrane. Its function is as follows. With PEX29, contributes to the formation of endoplasmic reticulum-mitochondria junctions which are important for mitochondrial function. Involved in lipid dropplets formation. In Ogataea parapolymorpha (strain ATCC 26012 / BCRC 20466 / JCM 22074 / NRRL Y-7560 / DL-1) (Yeast), this protein is Peroxisomal membrane protein PEX23.